A 472-amino-acid polypeptide reads, in one-letter code: Adenosylhomocysteinase (472 aa).

3 residues coordinate substrate: Thr-64, Asp-138, and Glu-198. 199 to 201 is a binding site for NAD(+); the sequence is TTT. Substrate-binding residues include Lys-228 and Asp-232. NAD(+) contacts are provided by residues Asn-233, 262-267, Glu-285, Asn-320, 341-343, and Asn-386; these read GFGDVG and IGH.

This sequence belongs to the adenosylhomocysteinase family. It depends on NAD(+) as a cofactor.

The protein localises to the cytoplasm. It catalyses the reaction S-adenosyl-L-homocysteine + H2O = L-homocysteine + adenosine. It functions in the pathway amino-acid biosynthesis; L-homocysteine biosynthesis; L-homocysteine from S-adenosyl-L-homocysteine: step 1/1. In terms of biological role, may play a key role in the regulation of the intracellular concentration of adenosylhomocysteine. This Prochlorococcus marinus subsp. pastoris (strain CCMP1986 / NIES-2087 / MED4) protein is Adenosylhomocysteinase.